The following is a 195-amino-acid chain: Phosphoheptose isomerase (195 aa).

The SIS domain maps to 37 to 195 (ISDSFKQHGK…IEFEMAKIRQ (159 aa)). 52-54 (NGG) serves as a coordination point for substrate. Positions 61 and 65 each coordinate Zn(2+). Substrate is bound by residues Glu-65, 93–94 (ND), 119–121 (STS), Ser-124, and Gln-172. Zn(2+) is bound by residues Gln-172 and His-180.

It belongs to the SIS family. GmhA subfamily. As to quaternary structure, homotetramer. Zn(2+) is required as a cofactor.

The protein resides in the cytoplasm. It catalyses the reaction 2 D-sedoheptulose 7-phosphate = D-glycero-alpha-D-manno-heptose 7-phosphate + D-glycero-beta-D-manno-heptose 7-phosphate. The protein operates within carbohydrate biosynthesis; D-glycero-D-manno-heptose 7-phosphate biosynthesis; D-glycero-alpha-D-manno-heptose 7-phosphate and D-glycero-beta-D-manno-heptose 7-phosphate from sedoheptulose 7-phosphate: step 1/1. Its function is as follows. Catalyzes the isomerization of sedoheptulose 7-phosphate in D-glycero-D-manno-heptose 7-phosphate. In Histophilus somni (strain 2336) (Haemophilus somnus), this protein is Phosphoheptose isomerase.